A 600-amino-acid chain; its full sequence is Novobiocin biosynthesis protein H (600 aa).

Residues 505-526 (GGKTDRAGLPDPVKATQPAGLG) form a disordered region. Residues 526 to 600 (GPRTPAEKVL…QLAAIATLEE (75 aa)) form the Carrier domain. Ser-561 is modified (O-(pantetheine 4'-phosphoryl)serine).

Belongs to the ATP-dependent AMP-binding enzyme family.

It functions in the pathway antibiotic biosynthesis; novobiocin biosynthesis. In terms of biological role, together with NovI, involved in the formation of a beta-OH-Tyr intermediate in the novobiocin biosynthesis pathway, an aminocoumarin family antibiotic that targets bacterial DNA gyrases. The ATP-dependent AMP-binding region activates L-Tyr as L-tyrosyl-AMP and then transfers the L-tyrosyl group to the acyl carrier domain through thioester formation to form a tyrosyl-S intermediate that is covalently tethered to NovH (L-Tyr-S-NovH). This Streptomyces niveus (Streptomyces spheroides) protein is Novobiocin biosynthesis protein H (novH).